Here is a 131-residue protein sequence, read N- to C-terminus: Insulin-like 3 (131 aa).

The signal sequence occupies residues 1-26; the sequence is MDPHPLTWALVLLGPALALSRAPAPA. 3 disulfides stabilise this stretch: cysteine 34-cysteine 116, cysteine 46-cysteine 129, and cysteine 115-cysteine 120. A propeptide spans 58–103 (c peptide like); it reads AVAGGDRELLQWLEGQHLFHGLMASGDPMLVLAPQPPPQASGHHHH.

This sequence belongs to the insulin family. As to quaternary structure, heterodimer of a B chain and an A chain linked by two disulfide bonds. As to expression, expressed exclusively in prenatal and postnatal Leydig cells.

It is found in the secreted. In terms of biological role, seems to play a role in testicular function. May be a trophic hormone with a role in testicular descent in fetal life. Is a ligand for LGR8 receptor. This is Insulin-like 3 (INSL3) from Sus scrofa (Pig).